The chain runs to 387 residues: Galactokinase (387 aa).

E33 to D36 provides a ligand contact to substrate. ATP contacts are provided by residues S67 and G124–S130. Positions 130 and 162 each coordinate Mg(2+). D174 acts as the Proton acceptor in catalysis. Y224 provides a ligand contact to substrate.

It belongs to the GHMP kinase family. GalK subfamily.

Its subcellular location is the cytoplasm. It catalyses the reaction alpha-D-galactose + ATP = alpha-D-galactose 1-phosphate + ADP + H(+). The protein operates within carbohydrate metabolism; galactose metabolism. Functionally, catalyzes the transfer of the gamma-phosphate of ATP to D-galactose to form alpha-D-galactose-1-phosphate (Gal-1-P). In Ligilactobacillus salivarius (strain UCC118) (Lactobacillus salivarius), this protein is Galactokinase.